Here is a 518-residue protein sequence, read N- to C-terminus: Ribonuclease Y (518 aa).

Residues 2-22 (VLNILLAIVGLIVGLGLGFVI) form a helical membrane-spanning segment. The disordered stretch occupies residues 91–119 (QREQTLDRKDDSLEKREGSLEEKEEKLGA). The KH domain maps to 208 to 268 (TVSVVTLPND…IRREIARMTL (61 aa)). An HD domain is found at 334-427 (VLNHSIEVAK…VAAADALSAA (94 aa)).

Belongs to the RNase Y family.

Its subcellular location is the cell membrane. Its function is as follows. Endoribonuclease that initiates mRNA decay. This is Ribonuclease Y from Enterococcus faecalis (strain ATCC 700802 / V583).